Reading from the N-terminus, the 209-residue chain is Octanoyltransferase (209 aa).

One can recognise a BPL/LPL catalytic domain in the interval Asp30–Lys209. Residues Arg69–His76, Ala143–Gly145, and Gly156–Ala158 each bind substrate. Cys174 (acyl-thioester intermediate) is an active-site residue.

It belongs to the LipB family.

Its subcellular location is the cytoplasm. It carries out the reaction octanoyl-[ACP] + L-lysyl-[protein] = N(6)-octanoyl-L-lysyl-[protein] + holo-[ACP] + H(+). It functions in the pathway protein modification; protein lipoylation via endogenous pathway; protein N(6)-(lipoyl)lysine from octanoyl-[acyl-carrier-protein]: step 1/2. Catalyzes the transfer of endogenously produced octanoic acid from octanoyl-acyl-carrier-protein onto the lipoyl domains of lipoate-dependent enzymes. Lipoyl-ACP can also act as a substrate although octanoyl-ACP is likely to be the physiological substrate. This is Octanoyltransferase from Rickettsia peacockii (strain Rustic).